We begin with the raw amino-acid sequence, 249 residues long: Tetrahydromethanopterin S-methyltransferase subunit D (249 aa).

Helical transmembrane passes span 9-29 (ILWL…VHFV), 47-67 (GTVQ…GFMM), 75-95 (LILA…MIVG), 138-158 (VSFV…ALVY), 183-203 (LVGI…VIPS), and 224-244 (AVIS…IAIS).

Belongs to the MtrD family. The complex is composed of 8 subunits; MtrA, MtrB, MtrC, MtrD, MtrE, MtrF, MtrG and MtrH.

The protein localises to the cell membrane. The enzyme catalyses 5-methyl-5,6,7,8-tetrahydromethanopterin + coenzyme M + 2 Na(+)(in) = 5,6,7,8-tetrahydromethanopterin + methyl-coenzyme M + 2 Na(+)(out). It participates in one-carbon metabolism; methanogenesis from CO(2); methyl-coenzyme M from 5,10-methylene-5,6,7,8-tetrahydromethanopterin: step 2/2. Its function is as follows. Part of a complex that catalyzes the formation of methyl-coenzyme M and tetrahydromethanopterin from coenzyme M and methyl-tetrahydromethanopterin. This is an energy-conserving, sodium-ion translocating step. In Methanosarcina acetivorans (strain ATCC 35395 / DSM 2834 / JCM 12185 / C2A), this protein is Tetrahydromethanopterin S-methyltransferase subunit D.